The sequence spans 142 residues: Large ribosomal subunit protein uL11 (142 aa).

The protein belongs to the universal ribosomal protein uL11 family. Part of the ribosomal stalk of the 50S ribosomal subunit. Interacts with L10 and the large rRNA to form the base of the stalk. L10 forms an elongated spine to which L12 dimers bind in a sequential fashion forming a multimeric L10(L12)X complex. In terms of processing, one or more lysine residues are methylated.

Functionally, forms part of the ribosomal stalk which helps the ribosome interact with GTP-bound translation factors. This is Large ribosomal subunit protein uL11 from Pectobacterium atrosepticum (strain SCRI 1043 / ATCC BAA-672) (Erwinia carotovora subsp. atroseptica).